We begin with the raw amino-acid sequence, 156 residues long: Small ribosomal subunit protein uS7 (156 aa).

Belongs to the universal ribosomal protein uS7 family. Part of the 30S ribosomal subunit. Contacts proteins S9 and S11.

Its function is as follows. One of the primary rRNA binding proteins, it binds directly to 16S rRNA where it nucleates assembly of the head domain of the 30S subunit. Is located at the subunit interface close to the decoding center, probably blocks exit of the E-site tRNA. This is Small ribosomal subunit protein uS7 from Anaeromyxobacter dehalogenans (strain 2CP-1 / ATCC BAA-258).